Reading from the N-terminus, the 334-residue chain is Mitochondrial glycine transporter (334 aa).

Solcar repeat units lie at residues 10-94 (SKSS…IRQA), 127-211 (LSNT…FKRR), and 234-318 (RAAA…LIMR). Helical transmembrane passes span 16-41 (FVAG…TRVQ), 69-95 (GTVP…RQAA), 133-158 (LLAG…VRYE), 186-209 (GFGA…EQFK), 238-264 (VNFS…KTRI), and 293-311 (GLGL…AWTL).

The protein belongs to the mitochondrial carrier (TC 2.A.29) family. SLC25A38 subfamily.

Its subcellular location is the mitochondrion inner membrane. It carries out the reaction glycine(in) = glycine(out). Mitochondrial glycine transporter that imports glycine into the mitochondrial matrix. Plays an important role in providing glycine for the first enzymatic step in heme biosynthesis, the condensation of glycine with succinyl-CoA to produce 5-aminolevulinate (ALA) in the mitochondrial matrix. The sequence is that of Mitochondrial glycine transporter from Pyricularia oryzae (strain 70-15 / ATCC MYA-4617 / FGSC 8958) (Rice blast fungus).